Here is a 491-residue protein sequence, read N- to C-terminus: Glutamate--tRNA ligase (491 aa).

Positions P13–N23 match the 'HIGH' region motif. Positions 110, 112, 137, and 139 each coordinate Zn(2+). The 'KMSKS' region motif lies at K254–R258. K257 serves as a coordination point for ATP.

Belongs to the class-I aminoacyl-tRNA synthetase family. Glutamate--tRNA ligase type 1 subfamily. In terms of assembly, monomer. It depends on Zn(2+) as a cofactor.

The protein localises to the cytoplasm. It carries out the reaction tRNA(Glu) + L-glutamate + ATP = L-glutamyl-tRNA(Glu) + AMP + diphosphate. In terms of biological role, catalyzes the attachment of glutamate to tRNA(Glu) in a two-step reaction: glutamate is first activated by ATP to form Glu-AMP and then transferred to the acceptor end of tRNA(Glu). The polypeptide is Glutamate--tRNA ligase (Listeria monocytogenes serotype 4b (strain F2365)).